A 294-amino-acid chain; its full sequence is Protease HtpX homolog 2 (294 aa).

The next 2 helical transmembrane spans lie at 15 to 35 (MLFT…FLSY) and 37 to 57 (GTPP…QYFY). A Zn(2+)-binding site is contributed by histidine 140. Glutamate 141 is a catalytic residue. Residue histidine 144 participates in Zn(2+) binding. Transmembrane regions (helical) follow at residues 151–171 (AVLT…RYSL) and 185–205 (GGIL…FLLI). Residue glutamate 213 participates in Zn(2+) binding.

It belongs to the peptidase M48B family. Zn(2+) serves as cofactor.

It is found in the cell membrane. The sequence is that of Protease HtpX homolog 2 from Methanosarcina acetivorans (strain ATCC 35395 / DSM 2834 / JCM 12185 / C2A).